The primary structure comprises 742 residues: MGNWLTGNWSSDRSSGYSSGWSPGGSSGVPSGPVHKLEKSIQANLTPNENCLKQIAVSSVPSQKLEGYIQENLKPNRESLKQIDQAVDAIWDLLRSQIPVKEVAKGGSYGRETALRGCSDGTLVLFMDCFQQFQDQIKYQDAYLDVIELWLKIHEKKSVKHEHALVVQVSVPGQRILLQLLPVFNPLRSNENPSSCVYVDLKKSMDQVRASPGEFSDCFTTLQQRFFKKYPQRLKDLILLVKHWYEQCQEKWKTPPPQPLLYALELLTVYAWEQGCQAEDFDMAQGVRTVLRLIQRPTELCVYWTVNYNFEDETVRNILLHQLRSQRPVILDPTDPTNNVGKDDGFWELLTEEAMAWLYSPSLNTESPAPYWDVLPMPLFVTPSHLLNKFIKDFLQPNKLFLKQIKEAVDIICSFLKNVCFLNSDTKVLKTVKGGSTAKGTALKRGSDADIVVFLSSLESYDSLKTNRSQFVQEIQKQLEEFVQAQEWEVTFEISKWKAPRVLSFTLKSKTLNESVEFDVLPAYDALGQLRSDFTLRPEAYKDLIELCASQDIKEGEFSICFTELQRNFIQTRPTKLKSLLRLIKHWYKQYERKMKPKASLPPKYALELLTVYAWEQGSGTDDFDIAEGFRTVLDLVIKYRQLCIFWTVNYNFEEEYMRKFLLTQIQKKRPVILDPADPTGDVGGGDRWCWHLLAEEAKEWLSSPCFQVEQKGLVQPWKVPVMQTPGSCGGQIYPTVGGVTK.

Residues 1–35 are disordered; the sequence is MGNWLTGNWSSDRSSGYSSGWSPGGSSGVPSGPVH. A lipid anchor (N-myristoyl glycine) is attached at glycine 2. A compositionally biased stretch (low complexity) spans 10-21; that stretch reads SSDRSSGYSSGW. OAS domain stretches follow at residues 60 to 374 and 382 to 721; these read VPSQ…YWDV and TPSH…WKVP. N6-acetyllysine is present on lysine 417. Position 436 (serine 436) interacts with ATP. 3 residues coordinate Mg(2+): aspartate 448, aspartate 450, and aspartate 519. The ATP site is built by arginine 582 and lysine 585.

Belongs to the 2-5A synthase family. In terms of assembly, homodimer. Mg(2+) is required as a cofactor. In terms of processing, myristoylation is not essential for its activity. Glycosylated. Glycosylation is essential for its activity. As to expression, expressed in the uterus. Expressed in mammary glands: expressed at low level before the establishment of lactation, then expression strongly increases, and subsequently decreases during early involution.

Its subcellular location is the cytoplasm. It is found in the perinuclear region. It carries out the reaction 3 ATP = 5'-triphosphoadenylyl-(2'-&gt;5')-adenylyl-(2'-&gt;5')-adenosine + 2 diphosphate. Its activity is regulated as follows. Produced as a latent enzyme which is activated by double stranded RNA (dsRNA) generated during the course of viral infection. The dsRNA activator must be at least 15 nucleotides long, and no modification of the 2'-hydroxyl group is tolerated. ssRNA or dsDNA do not act as activators. Strongly inhibited by copper, iron and zinc ions. Partially inhibited by cobalt and nickel ions. Its function is as follows. Interferon-induced, dsRNA-activated antiviral enzyme which plays a critical role in cellular innate antiviral response. Activated by detection of double stranded RNA (dsRNA): polymerizes higher oligomers of 2'-5'-oligoadenylates (2-5A) from ATP which then bind to the inactive monomeric form of ribonuclease L (RNASEL) leading to its dimerization and subsequent activation. Activation of RNASEL leads to degradation of cellular as well as viral RNA, resulting in the inhibition of protein synthesis, thus terminating viral replication. Can mediate the antiviral effect via the classical RNASEL-dependent pathway or an alternative antiviral pathway independent of RNASEL. In addition, it may also play a role in other cellular processes such as apoptosis, cell growth, differentiation and gene regulation. May act as a negative regulator of lactation, stopping lactation in virally infected mammary gland lobules, thereby preventing transmission of viruses to neonates. Non-infected lobules would not be affected, allowing efficient pup feeding during infection. The sequence is that of 2'-5'-oligoadenylate synthase 2 from Mus musculus (Mouse).